Consider the following 124-residue polypeptide: Small ribosomal subunit protein uS12 (124 aa).

Asp89 carries the post-translational modification 3-methylthioaspartic acid.

Belongs to the universal ribosomal protein uS12 family. As to quaternary structure, part of the 30S ribosomal subunit. Contacts proteins S8 and S17. May interact with IF1 in the 30S initiation complex.

In terms of biological role, with S4 and S5 plays an important role in translational accuracy. Interacts with and stabilizes bases of the 16S rRNA that are involved in tRNA selection in the A site and with the mRNA backbone. Located at the interface of the 30S and 50S subunits, it traverses the body of the 30S subunit contacting proteins on the other side and probably holding the rRNA structure together. The combined cluster of proteins S8, S12 and S17 appears to hold together the shoulder and platform of the 30S subunit. The chain is Small ribosomal subunit protein uS12 from Arthrobacter sp. (strain FB24).